Reading from the N-terminus, the 368-residue chain is Type 2 DNA topoisomerase 6 subunit A (368 aa).

Positions 9-148 constitute a Topo IIA-type catalytic domain; the sequence is TEDEIARERL…FHMRPEESGA (140 aa). Y103 serves as the catalytic O-(5'-phospho-DNA)-tyrosine intermediate. 2 residues coordinate Mg(2+): E201 and D253.

It belongs to the TOP6A family. As to quaternary structure, homodimer. Heterotetramer of two Top6A and two Top6B chains. It depends on Mg(2+) as a cofactor.

The enzyme catalyses ATP-dependent breakage, passage and rejoining of double-stranded DNA.. Its function is as follows. Relaxes both positive and negative superturns and exhibits a strong decatenase activity. The chain is Type 2 DNA topoisomerase 6 subunit A from Natronomonas pharaonis (strain ATCC 35678 / DSM 2160 / CIP 103997 / JCM 8858 / NBRC 14720 / NCIMB 2260 / Gabara) (Halobacterium pharaonis).